We begin with the raw amino-acid sequence, 351 residues long: Methylxanthine N1-demethylase NdmA (351 aa).

Residues 17–125 (WHPVCTVTEL…CEERYGLIWI (109 aa)) enclose the Rieske domain. [2Fe-2S] cluster is bound by residues cysteine 62, histidine 64, cysteine 81, and histidine 84.

Requires [2Fe-2S] cluster as cofactor.

The catalysed reaction is caffeine + NADH + O2 + H(+) = theobromine + formaldehyde + NAD(+) + H2O. It catalyses the reaction caffeine + NADPH + O2 + H(+) = theobromine + formaldehyde + NADP(+) + H2O. The enzyme catalyses theophylline + NADH + O2 + H(+) = 3-methylxanthine + formaldehyde + NAD(+) + H2O. It carries out the reaction theophylline + NADPH + O2 + H(+) = 3-methylxanthine + formaldehyde + NADP(+) + H2O. The catalysed reaction is 1,7-dimethylxanthine + NADH + O2 + H(+) = 7-methylxanthine + formaldehyde + NAD(+) + H2O. It catalyses the reaction 1,7-dimethylxanthine + NADPH + O2 + H(+) = 7-methylxanthine + formaldehyde + NADP(+) + H2O. It functions in the pathway alkaloid degradation. Involved in the caffeine degradation, which is the essential first step for assimilating the carbon and nitrogen in caffeine. Catalyzes the N1-demethylation of caffeine to produce theobromine and formaldehyde. Also catalyzes the N1-demethylation of theophylline, paraxanthine, and 1-methylxanthine to 3-methylxanthine, 7-methylxanthine, and xanthine, respectively. NADH is the preferred substrate. This Pseudomonas putida (Arthrobacter siderocapsulatus) protein is Methylxanthine N1-demethylase NdmA (ndmA).